Reading from the N-terminus, the 503-residue chain is ATP synthase subunit alpha, chloroplastic (503 aa).

170 to 177 contacts ATP; sequence GDRQTGKT.

This sequence belongs to the ATPase alpha/beta chains family. In terms of assembly, F-type ATPases have 2 components, CF(1) - the catalytic core - and CF(0) - the membrane proton channel. CF(1) has five subunits: alpha(3), beta(3), gamma(1), delta(1), epsilon(1). CF(0) has four main subunits: a, b, b' and c.

It localises to the plastid. Its subcellular location is the chloroplast thylakoid membrane. It catalyses the reaction ATP + H2O + 4 H(+)(in) = ADP + phosphate + 5 H(+)(out). Produces ATP from ADP in the presence of a proton gradient across the membrane. The alpha chain is a regulatory subunit. This Gracilaria tenuistipitata var. liui (Red alga) protein is ATP synthase subunit alpha, chloroplastic.